The sequence spans 339 residues: Ureidoglycine carbamoyltransferase (339 aa).

The protein belongs to the aspartate/ornithine carbamoyltransferase superfamily. In terms of assembly, homodimer.

It catalyses the reaction (S)-2-ureidoglycine + carbamoyl phosphate = allantoate + phosphate + H(+). It participates in purine metabolism. In terms of biological role, catalyzes the phosphorolysis of allantoate to ureidoglycine and carbamoyl phosphate. Is likely involved in a purine degradation pathway. The polypeptide is Ureidoglycine carbamoyltransferase (Rubrobacter xylanophilus (strain DSM 9941 / JCM 11954 / NBRC 16129 / PRD-1)).